The following is a 431-amino-acid chain: Serine--tRNA ligase (431 aa).

237–239 provides a ligand contact to L-serine; the sequence is TAE. ATP is bound at residue 268–270; the sequence is RSE. Glu291 contacts L-serine. 355–358 provides a ligand contact to ATP; that stretch reads EISS. Ser390 is an L-serine binding site.

This sequence belongs to the class-II aminoacyl-tRNA synthetase family. Type-1 seryl-tRNA synthetase subfamily. In terms of assembly, homodimer. The tRNA molecule binds across the dimer.

The protein resides in the cytoplasm. It carries out the reaction tRNA(Ser) + L-serine + ATP = L-seryl-tRNA(Ser) + AMP + diphosphate + H(+). It catalyses the reaction tRNA(Sec) + L-serine + ATP = L-seryl-tRNA(Sec) + AMP + diphosphate + H(+). It functions in the pathway aminoacyl-tRNA biosynthesis; selenocysteinyl-tRNA(Sec) biosynthesis; L-seryl-tRNA(Sec) from L-serine and tRNA(Sec): step 1/1. Its function is as follows. Catalyzes the attachment of serine to tRNA(Ser). Is also able to aminoacylate tRNA(Sec) with serine, to form the misacylated tRNA L-seryl-tRNA(Sec), which will be further converted into selenocysteinyl-tRNA(Sec). The sequence is that of Serine--tRNA ligase from Neisseria gonorrhoeae (strain NCCP11945).